Here is a 436-residue protein sequence, read N- to C-terminus: Adenylosuccinate synthetase (436 aa).

Residues 22 to 28 and 50 to 52 each bind GTP; these read GDEGKGK and GHE. Asp23 functions as the Proton acceptor in the catalytic mechanism. Mg(2+) is bound by residues Asp23 and Gly50. IMP is bound by residues 23–26, 48–51, Thr141, Arg155, Asn231, Thr246, and Arg310; these read DEGK and NAGH. Residue His51 is the Proton donor of the active site. 306–312 contacts substrate; sequence VSTARVR. GTP is bound by residues Arg312, 338–340, and 424–426; these read KMD and GVG.

This sequence belongs to the adenylosuccinate synthetase family. Homodimer. Requires Mg(2+) as cofactor.

It is found in the cytoplasm. The catalysed reaction is IMP + L-aspartate + GTP = N(6)-(1,2-dicarboxyethyl)-AMP + GDP + phosphate + 2 H(+). The protein operates within purine metabolism; AMP biosynthesis via de novo pathway; AMP from IMP: step 1/2. In terms of biological role, plays an important role in the salvage pathway for purine nucleotide biosynthesis. Catalyzes the first committed step in the biosynthesis of AMP from IMP. The chain is Adenylosuccinate synthetase from Babesia bovis.